The chain runs to 310 residues: Transcription initiation factor TFIID subunit 8 (310 aa).

The interval methionine 1–histidine 30 is disordered. Alanine 2 bears the N-acetylalanine mark. The 68-residue stretch at arginine 35–phenylalanine 102 folds into the Histone-fold; involved in forming hexamer structure in TFIID complex domain. Residue threonine 130 is modified to Phosphothreonine. Positions aspartate 262 to serine 310 are disordered. Residues threonine 270–arginine 283 are compositionally biased toward polar residues. Position 271 is a phosphoserine (serine 271). Residues tyrosine 294–lysine 307 carry the Nuclear localization signal motif. Positions proline 297–serine 310 are enriched in basic residues.

It belongs to the TAF8 family. Component of the TFIID basal transcription factor complex, composed of TATA-box-binding protein TBP, and a number of TBP-associated factors (TAFs), including TAF1, TAF2, TAF3, TAF4, TAF5, TAF6, TAF7, TAF8, TAF9, TAF10, TAF11, TAF12 and TAF13. Interacts with TBP, TAF1, TAF6, TAF10, TAF11 and TAF13. Component also of a small TAF complex (SMAT) containing TAF8, TAF10 and SUPT7L. Forms a heterodimer with TAF10. Interaction with TAF10 is mediated mainly via its histone fold domain while interaction with SUPT7L is via its C-terminal region.

It is found in the nucleus. Its subcellular location is the cytoplasm. The TFIID basal transcription factor complex plays a major role in the initiation of RNA polymerase II (Pol II)-dependent transcription. TFIID recognizes and binds promoters with or without a TATA box via its subunit TBP, a TATA-box-binding protein, and promotes assembly of the pre-initiation complex (PIC). The TFIID complex consists of TBP and TBP-associated factors (TAFs), including TAF1, TAF2, TAF3, TAF4, TAF5, TAF6, TAF7, TAF8, TAF9, TAF10, TAF11, TAF12 and TAF13. The TFIID complex structure can be divided into 3 modules TFIID-A, TFIID-B, and TFIID-C. TAF8 is involved in forming the TFIID-B module, together with TAF5. Mediates both basal and activator-dependent transcription. Plays a role in the differentiation of preadipocyte fibroblasts to adipocytes, however, does not seem to play a role in differentiation of myoblasts. Required for the integration of TAF10 in the TAF complex. May be important for survival of cells of the inner cell mass which constitute the pluripotent cell population of the early embryo. The polypeptide is Transcription initiation factor TFIID subunit 8 (TAF8) (Homo sapiens (Human)).